The primary structure comprises 338 residues: (-)-alpha-amorphene synthase ((2E,6E)-farnesyl diphosphate cyclizing) (338 aa).

Residues Asp105 and Glu109 each contribute to the Mg(2+) site. Positions 105-109 (DDRAE) match the DDXXE motif motif. Residue Arg196 participates in substrate binding. Mg(2+) is bound at residue Ser246. Lys249 is a substrate binding site. Glu250 is a binding site for Mg(2+). Residue 327–328 (RY) coordinates substrate.

This sequence belongs to the terpene synthase family. It depends on Mg(2+) as a cofactor.

It carries out the reaction (2E,6E)-farnesyl diphosphate = (-)-alpha-amorphene + diphosphate. It participates in secondary metabolite biosynthesis; terpenoid biosynthesis. Catalyzes the conversion of (2E,6E)-farnesyl diphosphate (FPP) to yield the bicyclic sesquiterpene (1R,6S,7S)-(-)-alpha-amorphene via a probable 1,6-cyclization, which could involve the abstraction of the pyrophosphate from FPP to yield a (R)-bisabolyl cation. The only accepted substrate is (2E,6E)-farnesyl diphosphate (FPP). The sequence is that of (-)-alpha-amorphene synthase ((2E,6E)-farnesyl diphosphate cyclizing) from Streptomyces viridochromogenes (strain DSM 40736 / JCM 4977 / BCRC 1201 / Tue 494).